A 545-amino-acid polypeptide reads, in one-letter code: Zinc finger protein with KRAB and SCAN domains 4 (545 aa).

The disordered stretch occupies residues 1-22; it reads MAREPRKNAALDAQSAEDQTGL. Glycyl lysine isopeptide (Lys-Gly) (interchain with G-Cter in SUMO2) cross-links involve residues Lys-26 and Lys-29. The disordered stretch occupies residues 34–55; it reads ALTAEVRAPCSPARGPERSRQR. In terms of domain architecture, SCAN box spans 53 to 135; the sequence is RQRFRGFRYP…VLLEYLERQL (83 aa). Glycyl lysine isopeptide (Lys-Gly) (interchain with G-Cter in SUMO2) cross-links involve residues Lys-178 and Lys-222. Positions 221 to 317 constitute a KRAB domain; the sequence is LKMEDVALTL…QRKQKNAIGS (97 aa). 5 consecutive C2H2-type zinc fingers follow at residues 320–342, 348–370, 376–398, 404–426, and 432–454; these read HYCHECGKSFAQSSGLTKHRRIH, YECEDCGKTFIGSSALVIHQRVH, YECEECGKVFSHSSNLIKHQRTH, YECDDCGKTFSQSCSLLEHHKIH, and YQCNMCGKAFRRNSHLLRHQRIH. Residues 455–467 are compositionally biased toward basic and acidic residues; that stretch reads GDKNVQNPEHGES. The interval 455–480 is disordered; it reads GDKNVQNPEHGESWESQGRTESQWEN. Over residues 468–480 the composition is skewed to polar residues; sequence WESQGRTESQWEN. 2 C2H2-type zinc fingers span residues 487–509 and 515–537; these read YKCNECERSFTRNRSLIEHQKIH and YQCDTCGKGFTRTSYLVQHQRSH.

This sequence belongs to the krueppel C2H2-type zinc-finger protein family. In terms of tissue distribution, expressed in adult heart, brain, placenta, lung and kidney, but not in adult liver and skeletal muscle. In 17-day old embryo, detected in liver, skeletal muscle, brain, heart and small intestine.

The protein resides in the nucleus. Its function is as follows. May be involved in the transcriptional activation of MDM2 and EP300 genes. This Homo sapiens (Human) protein is Zinc finger protein with KRAB and SCAN domains 4 (ZKSCAN4).